A 654-amino-acid chain; its full sequence is NADH-ubiquinone oxidoreductase chain 5 (654 aa).

The next 16 helical transmembrane spans lie at 1–21 (MYLA…FLGR), 30–50 (LITC…FYEV), 76–96 (FIYD…SALV), 113–133 (FFAY…GDNY), 135–155 (VMFI…NFWF), 178–198 (FSIG…TTVF), 200–220 (LAPF…LVAA), 241–261 (TPVS…YLLL), 274–294 (LILI…TGLL), 301–320 (VIAY…CGLS), 324–346 (VALF…AGSV), 365–385 (LLPF…ALPF), 406–426 (SGNL…MYSI), 451–471 (PLIM…FGYV), 510–530 (FLPL…YWIF), and 612–632 (TYAM…FFIG).

It belongs to the complex I subunit 5 family.

Its subcellular location is the mitochondrion inner membrane. The enzyme catalyses a ubiquinone + NADH + 5 H(+)(in) = a ubiquinol + NAD(+) + 4 H(+)(out). Functionally, core subunit of the mitochondrial membrane respiratory chain NADH dehydrogenase (Complex I) that is believed to belong to the minimal assembly required for catalysis. Complex I functions in the transfer of electrons from NADH to the respiratory chain. The immediate electron acceptor for the enzyme is believed to be ubiquinone. In Rhizopus stolonifer (Rhizopus nigricans), this protein is NADH-ubiquinone oxidoreductase chain 5 (ND5).